Reading from the N-terminus, the 95-residue chain is Aspartyl/glutamyl-tRNA(Asn/Gln) amidotransferase subunit C (95 aa).

Belongs to the GatC family. As to quaternary structure, heterotrimer of A, B and C subunits.

It catalyses the reaction L-glutamyl-tRNA(Gln) + L-glutamine + ATP + H2O = L-glutaminyl-tRNA(Gln) + L-glutamate + ADP + phosphate + H(+). The enzyme catalyses L-aspartyl-tRNA(Asn) + L-glutamine + ATP + H2O = L-asparaginyl-tRNA(Asn) + L-glutamate + ADP + phosphate + 2 H(+). Allows the formation of correctly charged Asn-tRNA(Asn) or Gln-tRNA(Gln) through the transamidation of misacylated Asp-tRNA(Asn) or Glu-tRNA(Gln) in organisms which lack either or both of asparaginyl-tRNA or glutaminyl-tRNA synthetases. The reaction takes place in the presence of glutamine and ATP through an activated phospho-Asp-tRNA(Asn) or phospho-Glu-tRNA(Gln). This chain is Aspartyl/glutamyl-tRNA(Asn/Gln) amidotransferase subunit C, found in Chlorobium phaeobacteroides (strain BS1).